Consider the following 206-residue polypeptide: MHSAVEKVAEDLSLSRENLSLEEVEKAIRTLLLWVGENPDREGLLETPKRIAKVYKELFSGYGESVDEILGVVFEEVAGYDEPVIVKDIFFYSHCEHHMIPIIGKAHVAYLPDKKIVGLSKIARVVDVFAHRLQTQETMTAQVANSLKKYLKPRGLAVLIEAEHMCMAMRGVQKQGAATITTSFHGYYKKDQVAQANFMTITRGIR.

Zn(2+) is bound by residues Cys95, His98, and Cys166.

It belongs to the GTP cyclohydrolase I family. As to quaternary structure, toroid-shaped homodecamer, composed of two pentamers of five dimers.

It catalyses the reaction GTP + H2O = 7,8-dihydroneopterin 3'-triphosphate + formate + H(+). It functions in the pathway cofactor biosynthesis; 7,8-dihydroneopterin triphosphate biosynthesis; 7,8-dihydroneopterin triphosphate from GTP: step 1/1. This is GTP cyclohydrolase 1 from Bartonella bacilliformis (strain ATCC 35685 / KC583 / Herrer 020/F12,63).